The following is a 270-amino-acid chain: Vegetative storage protein 1 (270 aa).

An N-terminal signal peptide occupies residues 1–17; sequence MKILSLSLLLLLAATVS. Asn115 and Asn215 each carry an N-linked (GlcNAc...) asparagine glycan.

This sequence belongs to the APS1/VSP family. As to expression, expressed in leaves and in gynoecia, especially in styles, the basal and distal ends of ovaries and in siliques.

In terms of biological role, may function as somatic storage protein during early seedling development. The chain is Vegetative storage protein 1 (VSP1) from Arabidopsis thaliana (Mouse-ear cress).